Consider the following 88-residue polypeptide: Large ribosomal subunit protein bL27 (88 aa).

Residues 1 to 21 (MAHKKGASSSRNGRDSNAQRL) form a disordered region. The segment covering 7-19 (ASSSRNGRDSNAQ) has biased composition (polar residues).

The protein belongs to the bacterial ribosomal protein bL27 family.

This Frankia casuarinae (strain DSM 45818 / CECT 9043 / HFP020203 / CcI3) protein is Large ribosomal subunit protein bL27.